The chain runs to 388 residues: Succinate--CoA ligase [ADP-forming] subunit beta (388 aa).

The 236-residue stretch at 9 to 244 (KEILRKYNVP…LDEEDPAEIE (236 aa)) folds into the ATP-grasp domain. ATP is bound by residues Lys-46, 53–55 (GRG), Glu-99, Ala-102, and Glu-107. 2 residues coordinate Mg(2+): Asn-199 and Asp-213. Residues Asn-264 and 321–323 (GIM) contribute to the substrate site.

Belongs to the succinate/malate CoA ligase beta subunit family. In terms of assembly, heterotetramer of two alpha and two beta subunits. Requires Mg(2+) as cofactor.

It carries out the reaction succinate + ATP + CoA = succinyl-CoA + ADP + phosphate. It catalyses the reaction GTP + succinate + CoA = succinyl-CoA + GDP + phosphate. It functions in the pathway carbohydrate metabolism; tricarboxylic acid cycle; succinate from succinyl-CoA (ligase route): step 1/1. Functionally, succinyl-CoA synthetase functions in the citric acid cycle (TCA), coupling the hydrolysis of succinyl-CoA to the synthesis of either ATP or GTP and thus represents the only step of substrate-level phosphorylation in the TCA. The beta subunit provides nucleotide specificity of the enzyme and binds the substrate succinate, while the binding sites for coenzyme A and phosphate are found in the alpha subunit. The polypeptide is Succinate--CoA ligase [ADP-forming] subunit beta (Ralstonia pickettii (strain 12J)).